The sequence spans 261 residues: Ubiquinone biosynthesis O-methyltransferase (261 aa).

A disordered region spans residues 1–22; the sequence is MTMQVDPSANSSAASSAAPGTT. Positions 8-18 are enriched in low complexity; it reads SANSSAASSAA. S-adenosyl-L-methionine is bound by residues Arg55, Gly86, Asp107, and Met149.

It belongs to the methyltransferase superfamily. UbiG/COQ3 family.

The catalysed reaction is a 3-demethylubiquinol + S-adenosyl-L-methionine = a ubiquinol + S-adenosyl-L-homocysteine + H(+). It carries out the reaction a 3-(all-trans-polyprenyl)benzene-1,2-diol + S-adenosyl-L-methionine = a 2-methoxy-6-(all-trans-polyprenyl)phenol + S-adenosyl-L-homocysteine + H(+). The protein operates within cofactor biosynthesis; ubiquinone biosynthesis. In terms of biological role, O-methyltransferase that catalyzes the 2 O-methylation steps in the ubiquinone biosynthetic pathway. In Nitrobacter winogradskyi (strain ATCC 25391 / DSM 10237 / CIP 104748 / NCIMB 11846 / Nb-255), this protein is Ubiquinone biosynthesis O-methyltransferase.